The primary structure comprises 145 residues: AP-2 complex subunit sigma (145 aa).

The protein belongs to the adaptor complexes small subunit family. In terms of assembly, adaptor protein complex 2 (AP-2) is a heterotetramer composed of two large adaptins (alpha-type subunit apl3 and beta-type subunit apl1), a medium chain (mu-type subunit apm4) and a small adaptin (sigma-type subunit aps2).

The protein resides in the cell membrane. It is found in the membrane. The protein localises to the coated pit. Functionally, component of the adaptor complexes which link clathrin to receptors in coated vesicles. Clathrin-associated protein complexes are believed to interact with the cytoplasmic tails of membrane proteins, leading to their selection and concentration. The chain is AP-2 complex subunit sigma (aps2) from Emericella nidulans (strain FGSC A4 / ATCC 38163 / CBS 112.46 / NRRL 194 / M139) (Aspergillus nidulans).